The following is a 183-amino-acid chain: Peptide deformylase (183 aa).

The Fe cation site is built by Cys-111 and His-154. Glu-155 is a catalytic residue. His-158 is a binding site for Fe cation.

Fe(2+) serves as cofactor.

It catalyses the reaction N-terminal N-formyl-L-methionyl-[peptide] + H2O = N-terminal L-methionyl-[peptide] + formate. Its function is as follows. Removes the formyl group from the N-terminal Met of newly synthesized proteins. Requires at least a dipeptide for an efficient rate of reaction. N-terminal L-methionine is a prerequisite for activity but the enzyme has broad specificity at other positions. The chain is Peptide deformylase from Staphylococcus aureus.